A 515-amino-acid chain; its full sequence is Maturase K (515 aa).

This sequence belongs to the intron maturase 2 family. MatK subfamily.

It is found in the plastid. Its subcellular location is the chloroplast. In terms of biological role, usually encoded in the trnK tRNA gene intron. Probably assists in splicing its own and other chloroplast group II introns. This is Maturase K from Pinus armandii (Chinese white pine).